The primary structure comprises 109 residues: SKSASIVMLTELVERGQAKCAQYWPNDGILTFGDIEVEFLSVNESEDYSERDFKVSNRSDNNGSQLIVKQFHYHGWPEVGAPVSGYSMIELVEDVQKQQQNSGNHPIVI.

Residues 1–109 form the Tyrosine-protein phosphatase domain; that stretch reads SKSASIVMLT…QNSGNHPIVI (109 aa). Glu78 is a binding site for substrate.

It belongs to the protein-tyrosine phosphatase family.

It catalyses the reaction O-phospho-L-tyrosyl-[protein] + H2O = L-tyrosyl-[protein] + phosphate. This chain is Tyrosine-protein phosphatase 4 (STY-4), found in Styela plicata (Wrinkled sea squirt).